A 297-amino-acid polypeptide reads, in one-letter code: Glucose-6-phosphate 1-epimerase (297 aa).

The substrate site is built by Arg57, Gln81, and Arg86. The residue at position 88 (Ser88) is a Phosphoserine. Residue His159 is part of the active site. A substrate-binding site is contributed by Asp203. Glu264 is a catalytic residue.

This sequence belongs to the glucose-6-phosphate 1-epimerase family.

It catalyses the reaction alpha-D-glucose 6-phosphate = beta-D-glucose 6-phosphate. Functionally, catalyzes the interconversion between the alpha and beta anomers from at least three hexose 6-phosphate sugars (Glc6P, Gal6P, and Man6P). The protein is Glucose-6-phosphate 1-epimerase of Saccharomyces cerevisiae (strain ATCC 204508 / S288c) (Baker's yeast).